The following is an 82-amino-acid chain: Protein RALF-like 8 (82 aa).

The N-terminal stretch at 1–28 (MGMSKSIKVILSLALVVFLALAGTKVEA) is a signal peptide. 2 disulfides stabilise this stretch: C47/C55 and C67/C73.

This sequence belongs to the plant rapid alkalinization factor (RALF) family. As to expression, expressed in leaves and flowers.

Its subcellular location is the secreted. In terms of biological role, cell signaling peptide that may regulate plant stress, growth, and development. Mediates a rapid alkalinization of extracellular space by mediating a transient increase in the cytoplasmic Ca(2+) concentration leading to a calcium-dependent signaling events through a cell surface receptor and a concomitant activation of some intracellular mitogen-activated protein kinases. This chain is Protein RALF-like 8 (RALFL8), found in Arabidopsis thaliana (Mouse-ear cress).